We begin with the raw amino-acid sequence, 126 residues long: Small ribosomal subunit protein uS13 (126 aa).

Residues 95–126 are disordered; it reads GLPVRGQRTQTNARTRKGKKKTVAGKKKAGRK. Residues 108 to 126 show a composition bias toward basic residues; it reads RTRKGKKKTVAGKKKAGRK.

This sequence belongs to the universal ribosomal protein uS13 family. Part of the 30S ribosomal subunit. Forms a loose heterodimer with protein S19. Forms two bridges to the 50S subunit in the 70S ribosome.

Its function is as follows. Located at the top of the head of the 30S subunit, it contacts several helices of the 16S rRNA. In the 70S ribosome it contacts the 23S rRNA (bridge B1a) and protein L5 of the 50S subunit (bridge B1b), connecting the 2 subunits; these bridges are implicated in subunit movement. Contacts the tRNAs in the A and P-sites. The sequence is that of Small ribosomal subunit protein uS13 from Thermobifida fusca (strain YX).